A 196-amino-acid polypeptide reads, in one-letter code: Major capsid protein (196 aa).

The tract at residues 27–55 (TAPVRPQRKRRQRGRNNKPRGGNGFARRS) is disordered. Residues 32–44 (PQRKRRQRGRNNK) are compositionally biased toward basic residues.

The protein belongs to the luteoviruses capsid protein family.

It localises to the virion. Major capsid protein. The sequence is that of Major capsid protein from Bean leafroll virus (BLRV).